The sequence spans 363 residues: Pyrimidine monooxygenase RutA (363 aa).

FMN-binding positions include 49–50, Asn-115, Glu-124, 140–141, and Ser-190; these read IK and RY.

Belongs to the NtaA/SnaA/DszA monooxygenase family. RutA subfamily.

The catalysed reaction is uracil + FMNH2 + NADH + O2 = (Z)-3-ureidoacrylate + FMN + NAD(+) + H2O + H(+). It catalyses the reaction thymine + FMNH2 + NADH + O2 = (Z)-2-methylureidoacrylate + FMN + NAD(+) + H2O + H(+). Functionally, catalyzes the pyrimidine ring opening between N-3 and C-4 by an unusual flavin hydroperoxide-catalyzed mechanism, adding oxygen atoms in the process to yield ureidoacrylate peracid, that immediately reacts with FMN forming ureidoacrylate and FMN-N(5)-oxide. The FMN-N(5)-oxide reacts spontaneously with NADH to produce FMN. Requires the flavin reductase RutF to regenerate FMN in vivo. This Klebsiella variicola (strain At-22) protein is Pyrimidine monooxygenase RutA.